Reading from the N-terminus, the 242-residue chain is Ubiquinone biosynthesis O-methyltransferase (242 aa).

The S-adenosyl-L-methionine site is built by arginine 36, glycine 56, aspartate 77, and methionine 130.

This sequence belongs to the methyltransferase superfamily. UbiG/COQ3 family.

It carries out the reaction a 3-demethylubiquinol + S-adenosyl-L-methionine = a ubiquinol + S-adenosyl-L-homocysteine + H(+). The enzyme catalyses a 3-(all-trans-polyprenyl)benzene-1,2-diol + S-adenosyl-L-methionine = a 2-methoxy-6-(all-trans-polyprenyl)phenol + S-adenosyl-L-homocysteine + H(+). Its pathway is cofactor biosynthesis; ubiquinone biosynthesis. Functionally, O-methyltransferase that catalyzes the 2 O-methylation steps in the ubiquinone biosynthetic pathway. This Pasteurella multocida (strain Pm70) protein is Ubiquinone biosynthesis O-methyltransferase.